The sequence spans 433 residues: Homoserine dehydrogenase (433 aa).

NADPH is bound by residues T12, V13, and K102. V13 lines the NAD(+) pocket. V13 and K102 together coordinate NADP(+). Positions 126, 129, 131, and 133 each coordinate Na(+). The NADP(+) site is built by G184 and E187. The L-homoserine site is built by E187 and D198. Residue K202 is the Proton donor of the active site. Residue G303 participates in NADPH binding. G303 is an NAD(+) binding site. Residue G303 coordinates NADP(+). Residues 356-433 enclose the ACT domain; it reads YCRFLCADVP…EIPSVIRVLS (78 aa).

Belongs to the homoserine dehydrogenase family. A metal cation serves as cofactor.

It carries out the reaction L-homoserine + NADP(+) = L-aspartate 4-semialdehyde + NADPH + H(+). It catalyses the reaction L-homoserine + NAD(+) = L-aspartate 4-semialdehyde + NADH + H(+). It participates in amino-acid biosynthesis; L-methionine biosynthesis via de novo pathway; L-homoserine from L-aspartate: step 3/3. It functions in the pathway amino-acid biosynthesis; L-threonine biosynthesis; L-threonine from L-aspartate: step 3/5. Catalyzes the conversion of L-aspartate-beta-semialdehyde (L-Asa) to L-homoserine (L-Hse), the third step in the biosynthesis of threonine and methionine from aspartate. The polypeptide is Homoserine dehydrogenase (hom) (Synechocystis sp. (strain ATCC 27184 / PCC 6803 / Kazusa)).